The primary structure comprises 673 residues: Kinesin-like protein KIFC1 (673 aa).

Residues Ser6, Ser26, Ser31, and Ser33 each carry the phosphoserine modification. Disordered stretches follow at residues 23–94 (KAPS…TGPR) and 109–136 (VPAV…KRPA). Residues 60–86 (TKITTSHPRVPSLTTVPQTQGQTTAQK) show a composition bias toward polar residues. A coiled-coil region spans residues 142–306 (QLCDLNAELK…RRRLHNQLQE (165 aa)). Positions 310-663 (NIRVFCRVRP…LRFASKVNQC (354 aa)) constitute a Kinesin motor domain. The tract at residues 325–372 (PTPPPGLLLFPSGPGGPSDPPTRLSLSRSDERRGTLSGAPAPPTRHDF) is disordered. At Thr359 the chain carries Phosphothreonine. 410 to 417 (GQTGSGKT) lines the ATP pocket.

The protein belongs to the TRAFAC class myosin-kinesin ATPase superfamily. Kinesin family. NCD subfamily. Binds NUBP1 and NUBP2. Interacts with PPP1R42.

The protein resides in the nucleus. The protein localises to the cytoplasm. It is found in the cytoskeleton. Its subcellular location is the microtubule organizing center. It localises to the centrosome. The protein resides in the spindle. The protein localises to the early endosome. Functionally, minus end-directed microtubule-dependent motor required for bipolar spindle formation. May contribute to movement of early endocytic vesicles. Regulates cilium formation and structure. The sequence is that of Kinesin-like protein KIFC1 (KIFC1) from Homo sapiens (Human).